The sequence spans 109 residues: Small ribosomal subunit protein uS17 (109 aa).

Belongs to the universal ribosomal protein uS17 family. Part of the 30S ribosomal subunit.

Functionally, one of the primary rRNA binding proteins, it binds specifically to the 5'-end of 16S ribosomal RNA. This chain is Small ribosomal subunit protein uS17, found in Thermoplasma acidophilum (strain ATCC 25905 / DSM 1728 / JCM 9062 / NBRC 15155 / AMRC-C165).